The chain runs to 622 residues: Iron transport multicopper oxidase FET3 (622 aa).

Positions 1–22 are cleaved as a signal peptide; that stretch reads MRPKLLSVEAALFLALPELARA. The Extracellular portion of the chain corresponds to 23–553; the sequence is ATRKFDFEIG…NTLPPGFTPR (531 aa). Plastocyanin-like domains lie at 31–146, 156–303, and 363–498; these read IGWV…VHDK, EEVV…VYDK, and YTEA…VEDP. N-linked (GlcNAc...) asparagine glycosylation is present at Asn76. His82 and His84 together coordinate Cu cation. Residues Asn89 and Asn114 are each glycosylated (N-linked (GlcNAc...) asparagine). The Cu cation site is built by His126 and His128. N-linked (GlcNAc...) asparagine glycosylation is found at Asn196, Asn200, and Asn294. Cu cation-binding residues include His414, His417, and His419. A glycan (N-linked (GlcNAc...) asparagine) is linked at Asn440. Cu cation-binding residues include His479, Cys480, His481, and His485. The helical transmembrane segment at 554–574 threads the bilayer; the sequence is GIVALVFSCICGILGVAVVAW. Residues 575 to 622 lie on the Cytoplasmic side of the membrane; sequence YGFSAPVGSTSAGALSAGLVENDSGDVHSAQKGPQETVVSPTGDARSH. Residues 597 to 622 form a disordered region; the sequence is DSGDVHSAQKGPQETVVSPTGDARSH.

This sequence belongs to the multicopper oxidase family.

It localises to the cell membrane. In terms of biological role, cell surface ferroxidase; part of the reductive iron assimilatory system (RIA), a siderophore-independent iron acquisition process. Required to oxidize Fe(2+) and release it from the transporter. Seems not to be involved in virulence. This Gibberella zeae (strain ATCC MYA-4620 / CBS 123657 / FGSC 9075 / NRRL 31084 / PH-1) (Wheat head blight fungus) protein is Iron transport multicopper oxidase FET3.